A 150-amino-acid polypeptide reads, in one-letter code: Protein NrdI (150 aa).

Belongs to the NrdI family.

Probably involved in ribonucleotide reductase function. This Mycobacterium avium (strain 104) protein is Protein NrdI.